We begin with the raw amino-acid sequence, 1027 residues long: Transient-receptor-potential-like protein (1027 aa).

A disordered region spans residues 1 to 22; that stretch reads MTKEGMLSAAGRRFSRCAPSPR. 3 ANK repeats span residues 85–115, 117–141, and 163–192; these read MGRT…RIGN, LLCA…ITRE, and SDIS…SIEK. The next 6 membrane-spanning stretches (helical) occupy residues 355–375, 391–411, 473–493, 516–536, 559–579, and 640–660; these read FFLY…YILM, FFYY…ATFE, FLMI…YYIF, VAEA…IYLF, FCFI…QLYW, and MFIM…IAMM. Disordered regions lie at residues 825–929 and 1008–1027; these read KRDI…TYTS and ENVK…NVEK. Positions 855–874 are enriched in acidic residues; that stretch reads EESEEDDKSDETSSTDEEAD. A compositionally biased stretch (basic and acidic residues) spans 910–923; that stretch reads RASEADSKLPDRPL. A compositionally biased stretch (polar residues) spans 1008–1017; sequence ENVKSPSPAS.

This sequence belongs to the transient receptor (TC 1.A.4) family. STrpC subfamily.

The protein resides in the membrane. In terms of biological role, could mediate calcium entry and form a calcium permeant channel. The protein is Transient-receptor-potential-like protein (trp-1) of Caenorhabditis elegans.